A 95-amino-acid chain; its full sequence is MSVDLATVKRVARLARIAVSDEEAERMTGELNGILGFVEQLSEVDVDGVEPMTSVMPMKMKKRDDIVADGDKADDIVANAPNSDRNFFLVPKVVE.

Belongs to the GatC family. In terms of assembly, heterotrimer of A, B and C subunits.

It catalyses the reaction L-glutamyl-tRNA(Gln) + L-glutamine + ATP + H2O = L-glutaminyl-tRNA(Gln) + L-glutamate + ADP + phosphate + H(+). It carries out the reaction L-aspartyl-tRNA(Asn) + L-glutamine + ATP + H2O = L-asparaginyl-tRNA(Asn) + L-glutamate + ADP + phosphate + 2 H(+). Functionally, allows the formation of correctly charged Asn-tRNA(Asn) or Gln-tRNA(Gln) through the transamidation of misacylated Asp-tRNA(Asn) or Glu-tRNA(Gln) in organisms which lack either or both of asparaginyl-tRNA or glutaminyl-tRNA synthetases. The reaction takes place in the presence of glutamine and ATP through an activated phospho-Asp-tRNA(Asn) or phospho-Glu-tRNA(Gln). This Rhizobium meliloti (strain 1021) (Ensifer meliloti) protein is Glutamyl-tRNA(Gln) amidotransferase subunit C.